The sequence spans 360 residues: Cuticle collagen dpy-2 (360 aa).

3 triple-helical region regions span residues 123-152, 174-230, and 238-303; these read GERG…PGTT, GPRG…KGRT, and GPPG…PGTC. 2 disordered regions span residues 127–158 and 174–360; these read PSGD…ASCI and GPRG…IRKW. Residues 189–198 show a composition bias toward gly residues; sequence GEYGIGGRPG. Residues 242–258 show a composition bias toward low complexity; sequence DSGLPGPWGPPGSAGMP. The segment covering 273-288 has biased composition (pro residues); the sequence is PGPPGAPGPGGMPGPN.

It belongs to the cuticular collagen family. As to quaternary structure, collagen polypeptide chains are complexed within the cuticle by disulfide bonds and other types of covalent cross-links.

Nematode cuticles are composed largely of collagen-like proteins. The cuticle functions both as an exoskeleton and as a barrier to protect the worm from its environment. Mutations in dpy-2 affects the body shape. The sequence is that of Cuticle collagen dpy-2 (dpy-2) from Caenorhabditis elegans.